Reading from the N-terminus, the 361-residue chain is Phosphoserine aminotransferase (361 aa).

Residue R42 coordinates L-glutamate. Pyridoxal 5'-phosphate-binding positions include A76–R77, W102, T153, D173, and Q196. An N6-(pyridoxal phosphate)lysine modification is found at K197. N238 to T239 is a pyridoxal 5'-phosphate binding site.

This sequence belongs to the class-V pyridoxal-phosphate-dependent aminotransferase family. SerC subfamily. Homodimer. Pyridoxal 5'-phosphate is required as a cofactor.

It localises to the cytoplasm. The enzyme catalyses O-phospho-L-serine + 2-oxoglutarate = 3-phosphooxypyruvate + L-glutamate. The catalysed reaction is 4-(phosphooxy)-L-threonine + 2-oxoglutarate = (R)-3-hydroxy-2-oxo-4-phosphooxybutanoate + L-glutamate. It functions in the pathway amino-acid biosynthesis; L-serine biosynthesis; L-serine from 3-phospho-D-glycerate: step 2/3. Its pathway is cofactor biosynthesis; pyridoxine 5'-phosphate biosynthesis; pyridoxine 5'-phosphate from D-erythrose 4-phosphate: step 3/5. In terms of biological role, catalyzes the reversible conversion of 3-phosphohydroxypyruvate to phosphoserine and of 3-hydroxy-2-oxo-4-phosphonooxybutanoate to phosphohydroxythreonine. This Pectobacterium atrosepticum (strain SCRI 1043 / ATCC BAA-672) (Erwinia carotovora subsp. atroseptica) protein is Phosphoserine aminotransferase.